Here is a 282-residue protein sequence, read N- to C-terminus: MADRVRKPEWLKINIGANDRYTETKRIVDSHCLHTICSSGRCPNMGECWGKGTATFMIGGDICTRSCKFCNTQTGRPHPLDANEPTHVAESIALMKLDHAVVTSVDRDDLPDLGAGHWAHTIREIKRLNPQTTIEVLIPDFQGRMELVDLVIEANPDIISHNMETVRRISPLVRSAANYDTSLQVIGHIARSGTKSKSGIMVGLGETPQEVETIMDDLLAVGCQILTIGQYLQPTHRHYPVAEYVTPQQFATYKTIGLEKGFSIVESAPLVRSSYHAEKHIR.

Residues Cys37, Cys42, Cys48, Cys63, Cys67, Cys70, and Ser274 each contribute to the [4Fe-4S] cluster site. The 215-residue stretch at 49–263 (WGKGTATFMI…KTIGLEKGFS (215 aa)) folds into the Radical SAM core domain.

The protein belongs to the radical SAM superfamily. Lipoyl synthase family. The cofactor is [4Fe-4S] cluster.

Its subcellular location is the cytoplasm. The catalysed reaction is [[Fe-S] cluster scaffold protein carrying a second [4Fe-4S](2+) cluster] + N(6)-octanoyl-L-lysyl-[protein] + 2 oxidized [2Fe-2S]-[ferredoxin] + 2 S-adenosyl-L-methionine + 4 H(+) = [[Fe-S] cluster scaffold protein] + N(6)-[(R)-dihydrolipoyl]-L-lysyl-[protein] + 4 Fe(3+) + 2 hydrogen sulfide + 2 5'-deoxyadenosine + 2 L-methionine + 2 reduced [2Fe-2S]-[ferredoxin]. Its pathway is protein modification; protein lipoylation via endogenous pathway; protein N(6)-(lipoyl)lysine from octanoyl-[acyl-carrier-protein]: step 2/2. In terms of biological role, catalyzes the radical-mediated insertion of two sulfur atoms into the C-6 and C-8 positions of the octanoyl moiety bound to the lipoyl domains of lipoate-dependent enzymes, thereby converting the octanoylated domains into lipoylated derivatives. The chain is Lipoyl synthase from Bacteroides thetaiotaomicron (strain ATCC 29148 / DSM 2079 / JCM 5827 / CCUG 10774 / NCTC 10582 / VPI-5482 / E50).